The primary structure comprises 443 residues: Cyclic GMP-AMP synthase (443 aa).

S61 lines the ATP pocket. Catalysis depends on residues D78 and D80. D80 contributes to the Mg(2+) binding site. N124 provides a ligand contact to ATP. The active site involves D138. D138 provides a ligand contact to Mg(2+). ATP is bound at residue L208.

It belongs to the CD-NTase family. B06 subfamily. Mg(2+) is required as a cofactor.

The catalysed reaction is GTP + ATP = 3',3'-cGAMP + 2 diphosphate. It carries out the reaction UTP + ATP = 3',3'-cUAMP + 2 diphosphate. The enzyme catalyses 2 ATP = 3',3'-c-di-AMP + 2 diphosphate. It catalyses the reaction 2 GTP = 3',3'-c-di-GMP + 2 diphosphate. The catalysed reaction is UTP + GTP = 3',3'-cGMP-UMP + 2 diphosphate. Cyclic nucleotide synthase (second messenger synthase) of a CBASS antivirus system. CBASS (cyclic oligonucleotide-based antiphage signaling system) provides immunity against bacteriophages. The CD-NTase protein (CdnB, this protein) synthesizes cyclic nucleotides in response to infection; these serve as specific second messenger signals. The signals activate a diverse range of effectors, leading to bacterial cell death and thus abortive phage infection. The effector protein for this system is membrane protein Cap15. Its function is as follows. Catalyzes the synthesis of 3',3'-cyclic GMP-AMP (3'3'-cGAMP) from GTP and ATP, a second messenger in cell signal transduction. Also makes cyclic UMP-AMP, cyclic UMP-GMP, cyclic di-AMP and cyclic-di-GMP. Functionally, protects E.coli against phage infection. When the CBASS operon (cdnB-cap15) is introduced in E.coli MG1655 there is about 100-fold protection against phage T2 and about 10-fold protection against phage T5 and T6. This chain is Cyclic GMP-AMP synthase, found in Escherichia albertii.